The following is a 147-amino-acid chain: Monothiol glutaredoxin-S5 (147 aa).

Residues 49 to 146 form the Glutaredoxin domain; the sequence is AAEVRRAVAE…PILKKAGALW (98 aa). Residue Cys69 participates in [2Fe-2S] cluster binding. The Responsive for interaction with TGA factors signature appears at 144–147; sequence ALWL.

This sequence belongs to the glutaredoxin family. CC-type subfamily.

The protein localises to the cytoplasm. The protein resides in the nucleus. In terms of biological role, may only reduce GSH-thiol disulfides, but not protein disulfides. This is Monothiol glutaredoxin-S5 (GRXS5) from Oryza sativa subsp. japonica (Rice).